Here is a 285-residue protein sequence, read N- to C-terminus: Inositol oxygenase (285 aa).

Residues 1 to 28 (MKVAADPDPSLVSQRDMEPEAAKDKDSF) form a disordered region. Over residues 15–28 (RDMEPEAAKDKDSF) the composition is skewed to basic and acidic residues. A substrate-binding site is contributed by R29. Position 33 is a phosphoserine (S33). 85-87 (DES) provides a ligand contact to substrate. H98, H123, and D124 together coordinate Fe cation. Substrate-binding positions include K127 and 141–142 (GD). 3 residues coordinate Fe cation: H194, H220, and D253. Position 220-221 (220-221 (HS)) interacts with substrate.

The protein belongs to the myo-inositol oxygenase family. It depends on Fe cation as a cofactor.

The protein resides in the cytoplasm. It carries out the reaction myo-inositol + O2 = D-glucuronate + H2O + H(+). It functions in the pathway polyol metabolism; myo-inositol degradation into D-glucuronate; D-glucuronate from myo-inositol: step 1/1. This is Inositol oxygenase (MIOX) from Bos taurus (Bovine).